The sequence spans 163 residues: Nucleotide-binding protein Cla_1551 (163 aa).

The protein belongs to the YajQ family.

Its function is as follows. Nucleotide-binding protein. This is Nucleotide-binding protein Cla_1551 from Campylobacter lari (strain RM2100 / D67 / ATCC BAA-1060).